The sequence spans 250 residues: Acetylglutamate kinase (250 aa).

Residues 41 to 42 (GG), Arg63, and Asn156 each bind substrate.

This sequence belongs to the acetylglutamate kinase family. ArgB subfamily.

It localises to the cytoplasm. The enzyme catalyses N-acetyl-L-glutamate + ATP = N-acetyl-L-glutamyl 5-phosphate + ADP. The protein operates within amino-acid biosynthesis; L-arginine biosynthesis; N(2)-acetyl-L-ornithine from L-glutamate: step 2/4. Catalyzes the ATP-dependent phosphorylation of N-acetyl-L-glutamate. In Listeria monocytogenes serotype 4a (strain HCC23), this protein is Acetylglutamate kinase.